The sequence spans 353 residues: Tetraacyldisaccharide 4'-kinase (353 aa).

49–56 provides a ligand contact to ATP; the sequence is TAGGTGKT.

It belongs to the LpxK family.

It catalyses the reaction a lipid A disaccharide + ATP = a lipid IVA + ADP + H(+). It participates in glycolipid biosynthesis; lipid IV(A) biosynthesis; lipid IV(A) from (3R)-3-hydroxytetradecanoyl-[acyl-carrier-protein] and UDP-N-acetyl-alpha-D-glucosamine: step 6/6. Its function is as follows. Transfers the gamma-phosphate of ATP to the 4'-position of a tetraacyldisaccharide 1-phosphate intermediate (termed DS-1-P) to form tetraacyldisaccharide 1,4'-bis-phosphate (lipid IVA). This Chlorobium phaeovibrioides (strain DSM 265 / 1930) (Prosthecochloris vibrioformis (strain DSM 265)) protein is Tetraacyldisaccharide 4'-kinase.